A 229-amino-acid polypeptide reads, in one-letter code: 7-cyano-7-deazaguanine synthase (229 aa).

15–25 contributes to the ATP binding site; the sequence is LSGGLDSTTCL. Residues Cys-192, Cys-202, Cys-205, and Cys-208 each coordinate Zn(2+).

The protein belongs to the QueC family. It depends on Zn(2+) as a cofactor.

The enzyme catalyses 7-carboxy-7-deazaguanine + NH4(+) + ATP = 7-cyano-7-deazaguanine + ADP + phosphate + H2O + H(+). The protein operates within purine metabolism; 7-cyano-7-deazaguanine biosynthesis. In terms of biological role, catalyzes the ATP-dependent conversion of 7-carboxy-7-deazaguanine (CDG) to 7-cyano-7-deazaguanine (preQ(0)). In Acinetobacter baylyi (strain ATCC 33305 / BD413 / ADP1), this protein is 7-cyano-7-deazaguanine synthase.